The following is a 959-amino-acid chain: General transcription factor II-I repeat domain-containing protein 1 (959 aa).

Residues lysine 27 and lysine 94 each participate in a glycyl lysine isopeptide (Lys-Gly) (interchain with G-Cter in SUMO2) cross-link. A compositionally biased stretch (basic and acidic residues) spans 96-106; that stretch reads PEAEHPKKVQR. Positions 96 to 117 are disordered; it reads PEAEHPKKVQRGEGGGRSLPRS. One copy of the GTF2I-like 1 repeat lies at 119–213; it reads LEHGSDVYLL…LEDGGRDSKA (95 aa). Residues lysine 184, lysine 212, lysine 225, lysine 238, lysine 271, lysine 294, lysine 308, lysine 337, lysine 436, lysine 439, and lysine 443 each participate in a glycyl lysine isopeptide (Lys-Gly) (interchain with G-Cter in SUMO2) cross-link. Residues 230 to 250 form a disordered region; that stretch reads CGLHGQAPKVPPQDLPPTATS. Residues 342-436 form a GTF2I-like 2 repeat; the sequence is IKETEDINTL…FDERIFTGNK (95 aa). Serine 448 carries the post-translational modification Phosphoserine. Positions 468–492 are disordered; the sequence is NARSDKGSMSEDCGPGTSGELGGLR. A GTF2I-like 3 repeat occupies 556–650; the sequence is DSHGDVIRPL…ELLTEGVKEP (95 aa). Residues lysine 567, lysine 579, lysine 588, lysine 622, lysine 638, and lysine 648 each participate in a glycyl lysine isopeptide (Lys-Gly) (interchain with G-Cter in SUMO2) cross-link. Serine 654 bears the Phosphoserine mark. A disordered region spans residues 654–679; it reads SQGTASSLGFSPPALPPERDSGDPLV. Glycyl lysine isopeptide (Lys-Gly) (interchain with G-Cter in SUMO2) cross-links involve residues proline 669, proline 670, aspartate 680, and lysine 684. Glutamine 686 carries the phosphoserine modification. 2 GTF2I-like repeats span residues 696 to 790 and 793 to 887; these read LSRI…KPDE and ANRL…ICND. Glycyl lysine isopeptide (Lys-Gly) (interchain with G-Cter in SUMO2) cross-links involve residues isoleucine 701, lysine 724, lysine 732, lysine 772, lysine 774, lysine 787, lysine 829, lysine 889, and lysine 893. The disordered stretch occupies residues 892–927; the sequence is AKDSSIPKRKRKRVSEGNSVSSSSSSSSSSSSNPDS. A Nuclear localization signal motif is present at residues 898–905; that stretch reads PKRKRKRV. A compositionally biased stretch (low complexity) spans 910–923; the sequence is SVSSSSSSSSSSSS.

The protein belongs to the TFII-I family. As to quaternary structure, interacts with the retinoblastoma protein (RB1) via its C-terminus. In terms of tissue distribution, highly expressed in adult skeletal muscle, heart, fibroblast, bone and fetal tissues. Expressed at lower levels in all other tissues tested.

The protein localises to the nucleus. In terms of biological role, may be a transcription regulator involved in cell-cycle progression and skeletal muscle differentiation. May repress GTF2I transcriptional functions, by preventing its nuclear residency, or by inhibiting its transcriptional activation. May contribute to slow-twitch fiber type specificity during myogenesis and in regenerating muscles. Binds troponin I slow-muscle fiber enhancer (USE B1). Binds specifically and with high affinity to the EFG sequences derived from the early enhancer of HOXC8. This Homo sapiens (Human) protein is General transcription factor II-I repeat domain-containing protein 1 (GTF2IRD1).